Reading from the N-terminus, the 374-residue chain is DNA replication and repair protein RecF (374 aa).

Position 30 to 37 (30 to 37 (GENAQGKT)) interacts with ATP.

Belongs to the RecF family.

The protein localises to the cytoplasm. Functionally, the RecF protein is involved in DNA metabolism; it is required for DNA replication and normal SOS inducibility. RecF binds preferentially to single-stranded, linear DNA. It also seems to bind ATP. The sequence is that of DNA replication and repair protein RecF from Geobacillus sp. (strain WCH70).